The following is a 98-amino-acid chain: Cobalt transport protein CbiN (98 aa).

2 helical membrane-spanning segments follow: residues 6–26 (VLMI…YSGL) and 68–88 (SLLF…FFGY).

It belongs to the CbiN family. As to quaternary structure, forms an energy-coupling factor (ECF) transporter complex composed of an ATP-binding protein (A component, CbiO), a transmembrane protein (T component, CbiQ) and 2 possible substrate-capture proteins (S components, CbiM and CbiN) of unknown stoichimetry.

Its subcellular location is the cell membrane. It participates in cofactor biosynthesis; adenosylcobalamin biosynthesis. Part of the energy-coupling factor (ECF) transporter complex CbiMNOQ involved in cobalt import. This Methanococcus maripaludis (strain DSM 14266 / JCM 13030 / NBRC 101832 / S2 / LL) protein is Cobalt transport protein CbiN.